We begin with the raw amino-acid sequence, 475 residues long: Pyruvate kinase (475 aa).

Arginine 33 lines the substrate pocket. K(+)-binding residues include asparagine 35, serine 37, and aspartate 67. 35-38 (NFSH) is an ATP binding site. ATP is bound by residues arginine 74 and lysine 155. Glutamate 220 is a binding site for Mg(2+). Substrate-binding residues include glycine 243, aspartate 244, and threonine 276. Position 244 (aspartate 244) interacts with Mg(2+).

The protein belongs to the pyruvate kinase family. Homotetramer. The cofactor is Mg(2+). K(+) serves as cofactor.

The enzyme catalyses pyruvate + ATP = phosphoenolpyruvate + ADP + H(+). It participates in carbohydrate degradation; glycolysis; pyruvate from D-glyceraldehyde 3-phosphate: step 5/5. The protein is Pyruvate kinase (pyk) of Corynebacterium glutamicum (strain ATCC 13032 / DSM 20300 / JCM 1318 / BCRC 11384 / CCUG 27702 / LMG 3730 / NBRC 12168 / NCIMB 10025 / NRRL B-2784 / 534).